The following is a 68-amino-acid chain: MTLEMRMVELETRQAFQDDTIQALNDVVVEQGRVIDRLQLQMAELIKRHEEMVGQYGSEGEEAPPPHY.

The protein belongs to the SlyX family.

This is Protein SlyX homolog from Pseudomonas putida (strain GB-1).